We begin with the raw amino-acid sequence, 380 residues long: MPIDPVALTADLVRCPSVTPEEGGALDLIERILSGAGFDCTRVDRNGVPNLFARWGRKGANRTFGFNGHTDVVPVGDAAAWTRDPFGGEIADGWLWGRGATDMKSGVAAFVAAAVDFVQETPPDGAVVLTITGDEEGDATDGTVALLDWMAAEGEAMSVCLVGEPTCPERLGEMMKIGRRGSMTAFFTARGVQGHSAYPHRAKNPVAALARLIDRLSSHDLDQGTEHFDASTLAVTTFDTGNPATNVIPALCRATVNIRFNDAHSGASLASWLEEEAARVTAETGVEIALSAKISGESFLTPPGELSELVARAVEAETGLRPEPSTSGGTSDARFVRAHCPVVEFGLVGKTMHQVDERVEVAQIEPLKAIYLRILKDYFA.

Residue histidine 69 participates in Zn(2+) binding. The active site involves aspartate 71. Position 102 (aspartate 102) interacts with Zn(2+). The active-site Proton acceptor is the glutamate 135. Zn(2+) contacts are provided by glutamate 136, glutamate 164, and histidine 353.

The protein belongs to the peptidase M20A family. DapE subfamily. Homodimer. Zn(2+) serves as cofactor. Co(2+) is required as a cofactor.

The catalysed reaction is N-succinyl-(2S,6S)-2,6-diaminopimelate + H2O = (2S,6S)-2,6-diaminopimelate + succinate. It participates in amino-acid biosynthesis; L-lysine biosynthesis via DAP pathway; LL-2,6-diaminopimelate from (S)-tetrahydrodipicolinate (succinylase route): step 3/3. Catalyzes the hydrolysis of N-succinyl-L,L-diaminopimelic acid (SDAP), forming succinate and LL-2,6-diaminopimelate (DAP), an intermediate involved in the bacterial biosynthesis of lysine and meso-diaminopimelic acid, an essential component of bacterial cell walls. The protein is Succinyl-diaminopimelate desuccinylase of Cereibacter sphaeroides (strain ATCC 17029 / ATH 2.4.9) (Rhodobacter sphaeroides).